The primary structure comprises 418 residues: Ceramide synthase LAC1 (418 aa).

Polar residues predominate over residues 1–14; sequence MSTIKPSPSNNNLK. The disordered stretch occupies residues 1–25; it reads MSTIKPSPSNNNLKVRSRPRRKSSI. Serine 2 is modified (N-acetylserine). The Cytoplasmic segment spans residues 2-81; that stretch reads STIKPSPSNN…WFSFREISYR (80 aa). The span at 15–24 shows a compositional bias: basic residues; that stretch reads VRSRPRRKSS. 2 positions are modified to phosphoserine: serine 23 and serine 24. A helical membrane pass occupies residues 82–102; it reads HAWIAPLMILIAVYSAYFTSG. N-linked (GlcNAc...) asparagine glycosylation occurs at asparagine 103. The Lumenal portion of the chain corresponds to 103 to 130; that stretch reads NTTKTNVLHRFVAVSYQIGDTNAYGKGI. The helical transmembrane segment at 131–155 threads the bilayer; sequence NDLCFVFYYMIFFTFLREFLMDVVI. Topologically, residues 156 to 172 are cytoplasmic; it reads RPFAIRLHVTSKHRIKR. Residues 168 to 385 form the TLC domain; that stretch reads HRIKRIMEQM…FRVLYRILWR (218 aa). Arginine 169, arginine 172, and tyrosine 182 together coordinate fumonisin B1. Residues 173-194 form a helical membrane-spanning segment; sequence IMEQMYAIFYTGVSGPFGIYCM. Topologically, residues 195 to 217 are lumenal; that stretch reads YHSDLWFFNTKAMYRTYPDFTNP. Residues 218–240 form a helical membrane-spanning segment; it reads FLFKVFYLGQAAFWAQQACILVL. Residues tyrosine 224 and tryptophan 231 each coordinate hexacosanoate. Fumonisin B1 is bound at residue tryptophan 231. Residue tryptophan 231 participates in hexacosanoyl-CoA binding. Residues 241–249 are Cytoplasmic-facing; the sequence is QLEKPRKDH. Residues 250–268 traverse the membrane as a helical segment; that stretch reads NELTFHHIVTLLLIWSSYV. Fumonisin B1 is bound at residue histidine 255. Residues histidine 255, threonine 259, leucine 262, isoleucine 263, serine 265, serine 266, phenylalanine 269, phenylalanine 271, methionine 274, glycine 275, isoleucine 278, tyrosine 279, methionine 282, aspartate 283, and aspartate 286 each coordinate hexacosanoate. Positions 255, 259, and 262 each coordinate hexacosanoyl-CoA. Residues serine 265 and serine 266 each contribute to the hexacosanoyl-CoA site. Residues 269 to 273 lie on the Lumenal side of the membrane; it reads FHFTK. Residues phenylalanine 271, methionine 274, glycine 275, isoleucine 278, tyrosine 279, and methionine 282 each contribute to the hexacosanoyl-CoA site. The helical transmembrane segment at 274–295 threads the bilayer; sequence MGLPIYITMDVSDFLLSFSKTL. 9 residues coordinate fumonisin B1: aspartate 286, leucine 289, lysine 293, asparagine 296, tyrosine 297, alanine 303, phenylalanine 304, phenylalanine 307, and tryptophan 314. Residues aspartate 286, leucine 289, lysine 293, and asparagine 296 each coordinate hexacosanoyl-CoA. Topologically, residues 296–305 are cytoplasmic; sequence NYLDSGLAFF. The chain crosses the membrane as a helical span at residues 306-334; the sequence is SFAIFVVAWIYLRHYINLKILWSVLTQFR. Residue phenylalanine 307 coordinates hexacosanoyl-CoA. Hexacosanoate contacts are provided by arginine 318, phenylalanine 343, tyrosine 348, isoleucine 352, serine 353, isoleucine 356, valine 357, leucine 360, isoleucine 361, and tryptophan 371. Arginine 318 contacts hexacosanoyl-CoA. At 335–353 the chain is on the lumenal side; the sequence is TEGNYVLNFATQQYKCWIS. Residues tyrosine 348, isoleucine 352, serine 353, isoleucine 356, valine 357, and leucine 360 each contribute to the hexacosanoyl-CoA site. Residues 354-382 traverse the membrane as a helical segment; sequence LPIVFVLIGALQLVNLYWLFLIFRVLYRI. Fumonisin B1-binding residues include tryptophan 371, isoleucine 375, valine 378, isoleucine 382, and arginine 385. Tryptophan 371 contacts hexacosanoyl-CoA. Over 383 to 418 the chain is Cytoplasmic; sequence LWRGILKDDRSDSESDEESDESSTTPTDSTPTKKDI. The tract at residues 390 to 418 is disordered; sequence DDRSDSESDEESDESSTTPTDSTPTKKDI.

It belongs to the sphingosine N-acyltransferase family. As to quaternary structure, component of the ceramide synthase complex composed of at least LAC1, LAG1 and LIP1. Forms a heterotetrameric complex, where one unit of the LIP1 homodimer interacts with LAC1 and the other with either LAC1 or LAG1. Phosphorylated; phosphorylation is induced upon disruption of sphingolipid synthesis. Phosphorylation is inhibited by exogenous addition of phytosphingosine.

The protein resides in the endoplasmic reticulum membrane. The catalysed reaction is a very long-chain fatty acyl-CoA + a sphingoid base = an N-(very-long-chain fatty acyl)-sphingoid base + CoA + H(+). The enzyme catalyses hexacosanoyl-CoA + sphinganine = N-hexacosanoylsphinganine + CoA + H(+). It carries out the reaction eicosanoyl-CoA + sphinganine = N-eicosanoylsphinganine + CoA + H(+). It catalyses the reaction a fatty acyl-CoA + sphinganine = an N-acylsphinganine + CoA + H(+). The catalysed reaction is (4R)-hydroxysphinganine + a fatty acyl-CoA = an N-acyl-(4R)-4-hydroxysphinganine + CoA + H(+). Its pathway is lipid metabolism; sphingolipid metabolism. Its activity is regulated as follows. As part of the ceramide synthase complex, inhibited by the sphinganine analog mycotoxin, fumonisin B1 (FB1). Activated by ACB1, as part of the ceramide synthase complex. Component of the ceramide synthase complex that catalyzes the transfer of the acyl chain from acyl-CoA to a sphingoid base, with high selectivity toward hexacosanoyl-CoA (C26:0-CoA). N-acylates sphinganine and phytosphingosine bases to form dihydroceramides and phytoceramides, respectively. Redundant with LAG1. Facilitates ER-to-Golgi transport of GPI-anchored proteins. Has a lower affinity for phytosphingosine (PHS) than dihydrosphingosine (DHS); PHS is required for the synthesis of phytoceramides and the formation of nuclear envelopes. Along with LAG1, plays a role in pheromone-induced MAP kinase-activation of mating and formation of diploid cells. May also play a role, together with LAG1, in the polarized membrane distribution of phosphatidylinositol 4,5 biphosphate required for STE5 localization to the plasma membrane. The protein is Ceramide synthase LAC1 (LAC1) of Saccharomyces cerevisiae (strain ATCC 204508 / S288c) (Baker's yeast).